Consider the following 710-residue polypeptide: Elongation factor G (710 aa).

The region spanning 8 to 290 (SQYRNIGISA…AIVEYLPSPM (283 aa)) is the tr-type G domain. GTP-binding positions include 17–24 (AHIDAGKT), 88–92 (DTPGH), and 142–145 (NKMD).

Belongs to the TRAFAC class translation factor GTPase superfamily. Classic translation factor GTPase family. EF-G/EF-2 subfamily.

It localises to the cytoplasm. Functionally, catalyzes the GTP-dependent ribosomal translocation step during translation elongation. During this step, the ribosome changes from the pre-translocational (PRE) to the post-translocational (POST) state as the newly formed A-site-bound peptidyl-tRNA and P-site-bound deacylated tRNA move to the P and E sites, respectively. Catalyzes the coordinated movement of the two tRNA molecules, the mRNA and conformational changes in the ribosome. In Buchnera aphidicola subsp. Baizongia pistaciae (strain Bp), this protein is Elongation factor G.